An 889-amino-acid polypeptide reads, in one-letter code: Putative receptor-like protein kinase At3g46340 (889 aa).

The N-terminal stretch at 1–25 is a signal peptide; it reads MEFPHSVLLVVLIIATFAISNLVQA. Residues 26–514 lie on the Extracellular side of the membrane; the sequence is EEDQEGFISL…VITKKKFPVM (489 aa). N-linked (GlcNAc...) asparagine glycans are attached at residues asparagine 185, asparagine 239, asparagine 259, asparagine 292, asparagine 316, asparagine 342, asparagine 366, asparagine 419, asparagine 435, asparagine 448, asparagine 467, and asparagine 474. 3 LRR repeats span residues 414-437, 438-460, and 462-483; these read RITS…QNLT, HLDK…LASM, and SLSF…ALLK. A helical membrane pass occupies residues 515 to 535; the sequence is IVALVSSAVVVILVVLVLIFV. Over 536–889 the chain is Cytoplasmic; that stretch reads FKKKKPSNLE…FDTKAVPSAR (354 aa). The interval 544–566 is disordered; that stretch reads LEDLPPSSNTPRENITSTSISDT. Residues 585–874 enclose the Protein kinase domain; that stretch reads KNLQRPLGEG…TQGMDSHSSF (290 aa). Residues 591–599 and lysine 614 each bind ATP; that span reads LGEGGFGVV. At tyrosine 659 the chain carries Phosphotyrosine. The Proton acceptor role is filled by aspartate 711. Residue serine 745 is modified to Phosphoserine. Threonine 746 and threonine 751 each carry phosphothreonine. Tyrosine 759 is subject to Phosphotyrosine. The interval 863-889 is disordered; sequence NKTQGMDSHSSFEQSMSFDTKAVPSAR. Residues 864-880 show a composition bias toward polar residues; it reads KTQGMDSHSSFEQSMSF.

This sequence belongs to the protein kinase superfamily. Ser/Thr protein kinase family.

Its subcellular location is the cell membrane. The enzyme catalyses L-seryl-[protein] + ATP = O-phospho-L-seryl-[protein] + ADP + H(+). The catalysed reaction is L-threonyl-[protein] + ATP = O-phospho-L-threonyl-[protein] + ADP + H(+). The sequence is that of Putative receptor-like protein kinase At3g46340 from Arabidopsis thaliana (Mouse-ear cress).